The primary structure comprises 283 residues: MKLIHDVQEMQQTVLGLKRQGKRIAFVPTMGFLHEGHASLMREGRTRGDVLVLSIFVNPTQFGINEDLASYPRNLEGDCALAESCGVDLVFAPTAAGMYPPGFQTTVALGPLTKPLCGASRPGHFDGVAVVVTKLFGIVQPDCALFGKKDFQQLAIIRQMTLDLNLPVEIIGMPIVREPDGLAMSSRNSYLSVEQRQQALCLHRAILKVRELFKGGETSVDRLLGEARMIITAVPEASVDYLELRDSTTLEPVATAAADSLFALAVKIGSTRLIDNTVLGDTP.

30-37 (MGFLHEGH) contacts ATP. Histidine 37 serves as the catalytic Proton donor. Glutamine 61 lines the (R)-pantoate pocket. Glutamine 61 is a binding site for beta-alanine. 147–150 (GKKD) is a binding site for ATP. Glutamine 153 contacts (R)-pantoate. ATP is bound by residues valine 176 and 184-187 (MSSR).

The protein belongs to the pantothenate synthetase family. In terms of assembly, homodimer.

Its subcellular location is the cytoplasm. It carries out the reaction (R)-pantoate + beta-alanine + ATP = (R)-pantothenate + AMP + diphosphate + H(+). The protein operates within cofactor biosynthesis; (R)-pantothenate biosynthesis; (R)-pantothenate from (R)-pantoate and beta-alanine: step 1/1. Its function is as follows. Catalyzes the condensation of pantoate with beta-alanine in an ATP-dependent reaction via a pantoyl-adenylate intermediate. This Trichlorobacter lovleyi (strain ATCC BAA-1151 / DSM 17278 / SZ) (Geobacter lovleyi) protein is Pantothenate synthetase.